A 130-amino-acid polypeptide reads, in one-letter code: 3-aminoacrylate deaminase RutC (130 aa).

It belongs to the RutC family.

It carries out the reaction (Z)-3-aminoacrylate + H2O + H(+) = 3-oxopropanoate + NH4(+). Its function is as follows. Involved in pyrimidine catabolism. Catalyzes the deamination of 3-aminoacrylate to malonic semialdehyde, a reaction that can also occur spontaneously. RutC may facilitate the reaction and modulate the metabolic fitness, rather than catalyzing essential functions. The polypeptide is 3-aminoacrylate deaminase RutC (Klebsiella pneumoniae (strain 342)).